The chain runs to 229 residues: Pyridoxal phosphate homeostasis protein (229 aa).

Lys-36 is modified (N6-(pyridoxal phosphate)lysine).

The protein belongs to the pyridoxal phosphate-binding protein YggS/PROSC family. Monomer.

In terms of biological role, pyridoxal 5'-phosphate (PLP)-binding protein, which is involved in PLP homeostasis. This chain is Pyridoxal phosphate homeostasis protein, found in Buchnera aphidicola subsp. Schizaphis graminum (strain Sg).